We begin with the raw amino-acid sequence, 101 residues long: MELAVIGKSEFVTGFRLAGISKVYETPDIPATESAVRSVLEDKSVGILVMHNDDIGNLPEVLRKNLNESVQPTVVALGGSGSGSTSLREKIKQAVGVDLWK.

This sequence belongs to the V-ATPase F subunit family. In terms of assembly, has multiple subunits, A(3), B(3), C, D, E, F, G, I and K(x); there may be a few other subunits as well.

Its subcellular location is the cell membrane. Its function is as follows. Component of the A-type ATP synthase that produces ATP from ADP in the presence of a proton gradient across the membrane. This is A-type ATP synthase subunit F from Methanosarcina mazei (strain ATCC BAA-159 / DSM 3647 / Goe1 / Go1 / JCM 11833 / OCM 88) (Methanosarcina frisia).